The chain runs to 305 residues: Tyrosine recombinase XerC (305 aa).

The Core-binding (CB) domain occupies 4-95; sequence TSIQALINKW…AVKNFYRFLE (92 aa). A Tyr recombinase domain is found at 116–298; that stretch reads LLPKALSEDD…SIKHLEAVYT (183 aa). Active-site residues include R159, K182, H250, R253, and H276. Y285 (O-(3'-phospho-DNA)-tyrosine intermediate) is an active-site residue.

Belongs to the 'phage' integrase family. XerC subfamily. Forms a cyclic heterotetrameric complex composed of two molecules of XerC and two molecules of XerD.

The protein localises to the cytoplasm. Functionally, site-specific tyrosine recombinase, which acts by catalyzing the cutting and rejoining of the recombining DNA molecules. The XerC-XerD complex is essential to convert dimers of the bacterial chromosome into monomers to permit their segregation at cell division. It also contributes to the segregational stability of plasmids. The chain is Tyrosine recombinase XerC from Rickettsia conorii (strain ATCC VR-613 / Malish 7).